The primary structure comprises 327 residues: MQHLEEIIANASAAIEAAESLVVLDEVRVQYLGKKGELTAQLQSLGKLPPEERREAGQEINKAKGAVQQAIAARKDALQRAELEAKLAAETIDVTLPGRRIENGGLHPVTRTVERIEQFFGELGFNTESGPEIEDAFHNFDALNIAEDHPARTDHDTFFFNPDLMLRTHTSGVQIRTMENGKPPFRFIAPGRVYRNDYDQTHTPMFHQVEGMLVDENVNFAQLKGILHDFLCNFFEEEVEVRFRPSYFPFTEPSAEVDVKGKNGKWLEVLGCGMVHPNVLRSVGIDPEKYSGFAFGMGVERLTMLRYGVNDLRAFFENDLRFLKQFK.

Residue Glu-252 participates in Mg(2+) binding.

The protein belongs to the class-II aminoacyl-tRNA synthetase family. Phe-tRNA synthetase alpha subunit type 1 subfamily. As to quaternary structure, tetramer of two alpha and two beta subunits. The cofactor is Mg(2+).

It is found in the cytoplasm. The catalysed reaction is tRNA(Phe) + L-phenylalanine + ATP = L-phenylalanyl-tRNA(Phe) + AMP + diphosphate + H(+). This Vibrio campbellii (strain ATCC BAA-1116) protein is Phenylalanine--tRNA ligase alpha subunit.